The following is a 173-amino-acid chain: Glycine cleavage system H protein, mitochondrial (173 aa).

Residues Met1 to Leu48 constitute a mitochondrion transit peptide. The region spanning Val66–Thr148 is the Lipoyl-binding domain. Lys107 is subject to N6-lipoyllysine.

This sequence belongs to the GcvH family. As to quaternary structure, interacts with GLDC. The glycine cleavage system is composed of four proteins: P (GLDC), T (GCST), L (DLD) and H (GCSH). (R)-lipoate is required as a cofactor.

It is found in the mitochondrion. In terms of biological role, the glycine cleavage system catalyzes the degradation of glycine. The H protein (GCSH) shuttles the methylamine group of glycine from the P protein (GLDC) to the T protein (GCST). Has a pivotal role in the lipoylation of enzymes involved in cellular energetics such as the mitochondrial dihydrolipoyllysine-residue acetyltransferase component of pyruvate dehydrogenase complex (DLAT), and the mitochondrial dihydrolipoyllysine-residue succinyltransferase component of 2-oxoglutarate dehydrogenase complex (DLST). In Bos taurus (Bovine), this protein is Glycine cleavage system H protein, mitochondrial.